A 1089-amino-acid polypeptide reads, in one-letter code: SUMO-specific isopeptidase USPL1 (1089 aa).

The interval 90-128 (LISPDSEDCPTPSKPQKRKRLETNCRNSPLPVHSKKTRS) is disordered. Positions 215-488 (VQWKNTQALC…ETHIVIWERK (274 aa)) constitute a USP domain. Cys-224 serves as the catalytic Nucleophile. An SUMO-binding region spans residues 224 to 483 (CWLDCILSAL…EVPASETHIV (260 aa)). Residue His-444 is the Proton acceptor of the active site. Disordered regions lie at residues 687–739 (DSQT…KEDQ), 791–817 (ISRR…SPPL), 835–868 (LREQ…AAED), and 891–928 (LISS…CGSP). Over residues 719-733 (TASSKTVAARSAQNQ) the composition is skewed to polar residues. Residues 791-803 (ISRRSKRMSRKAK) are compositionally biased toward basic residues. A Phosphoserine modification is found at Ser-894. Basic and acidic residues predominate over residues 895 to 907 (PHREPSLSDHSEP).

This sequence belongs to the peptidase C19 family. In terms of assembly, interacts with ELL.

The protein localises to the nucleus. It is found in the cajal body. Its function is as follows. SUMO-specific isopeptidase involved in protein desumoylation. Specifically binds SUMO proteins with a higher affinity for SUMO2 and SUMO3 which it cleaves more efficiently. Also able to process full-length SUMO proteins to their mature forms. Plays a key role in RNA polymerase-II-mediated snRNA transcription in the Cajal bodies. Is a component of complexes that can bind to U snRNA genes. The polypeptide is SUMO-specific isopeptidase USPL1 (Uspl1) (Mus musculus (Mouse)).